A 174-amino-acid chain; its full sequence is MTQTIFMVGARGAGKTTIGKALAQALGYRFVDTDLFMQQTSQMTVAEVVESEGWDGFRLRESMALQAVTAPKTVIATGGGAVLSSENRAFMRDHGRVIYLRASAAVLAKRLAEDPEEAQRPSLTGKPIVEEMLDVLASREALYQDVAHHVLDGTQTPSLVVEQILQMLTGEMVK.

Position 12-17 (glycine 12–threonine 17) interacts with ATP. Residues threonine 16 and aspartate 32 each coordinate Mg(2+). Residues aspartate 34, arginine 58, and glycine 79 each contribute to the substrate site. An LID domain region spans residues alanine 112–lysine 126. An ATP-binding site is contributed by arginine 120. Arginine 139 contributes to the substrate binding site. Position 155 (glutamine 155) interacts with ATP.

It belongs to the shikimate kinase family. AroL subfamily. Monomer. Mg(2+) is required as a cofactor.

Its subcellular location is the cytoplasm. It carries out the reaction shikimate + ATP = 3-phosphoshikimate + ADP + H(+). Its pathway is metabolic intermediate biosynthesis; chorismate biosynthesis; chorismate from D-erythrose 4-phosphate and phosphoenolpyruvate: step 5/7. In terms of biological role, catalyzes the specific phosphorylation of the 3-hydroxyl group of shikimic acid using ATP as a cosubstrate. The polypeptide is Shikimate kinase 2 (Yersinia pseudotuberculosis serotype IB (strain PB1/+)).